A 692-amino-acid polypeptide reads, in one-letter code: Polyribonucleotide nucleotidyltransferase (692 aa).

2 residues coordinate Mg(2+): D484 and D490. In terms of domain architecture, KH spans 551–610; sequence PRIITIQINPDRIRDVIGPGGKVIRALTEETGATIDIQDNGTVTIASVDGEAGAAAKRRI. Residues 620 to 688 enclose the S1 motif domain; the sequence is DTIYDGKVAK…RQGKIKLSMK (69 aa).

It belongs to the polyribonucleotide nucleotidyltransferase family. In terms of assembly, component of the RNA degradosome, which is a multiprotein complex involved in RNA processing and mRNA degradation. Mg(2+) is required as a cofactor.

The protein localises to the cytoplasm. It catalyses the reaction RNA(n+1) + phosphate = RNA(n) + a ribonucleoside 5'-diphosphate. Functionally, involved in mRNA degradation. Catalyzes the phosphorolysis of single-stranded polyribonucleotides processively in the 3'- to 5'-direction. This chain is Polyribonucleotide nucleotidyltransferase, found in Acidithiobacillus ferrooxidans (strain ATCC 53993 / BNL-5-31) (Leptospirillum ferrooxidans (ATCC 53993)).